We begin with the raw amino-acid sequence, 699 residues long: SPS-sensor serine protease component SSY5 (699 aa).

Disordered stretches follow at residues 1-113 (MVRF…LQGF) and 128-158 (PVKE…ENAR). Positions 1-381 (MVRFFGLNKK…YCVKDYIKKA (381 aa)) are excised as a propeptide. Positions 24–38 (NEQNAAETSSSNVSG) are enriched in polar residues. Positions 39–51 (NEERIDPNSHDTN) are enriched in basic and acidic residues. The span at 61–78 (STTFGSSIQSSSIFSRGR) shows a compositional bias: low complexity. Polar residues predominate over residues 83 to 93 (TGASSSMATSE). Low complexity-rich tracts occupy residues 97–109 (HSSG…NSKN) and 144–154 (SSSTSSTLATS). A serine protease region spans residues 459-699 (FAITCAHVVL…QWDIDPQLDG (241 aa)). Catalysis depends on charge relay system residues His465, Asp545, and Ser640.

The protein belongs to the peptidase S64 family. As to quaternary structure, component of the plasma membrane SPS (SSY1-PTR3-SSY5) amino acid sensor complex. In terms of processing, the propeptide is autoproteolytically cleaved from the catalytic domain but remains associated, forming an inactive protease complex. This processing occurs even in the absence of signaling.

It localises to the cell membrane. Protease component of the SPS-sensor system, which regulates the expression of several amino acid-metabolizing enzymes and amino acid- and peptide-permeases in response to extracellular amino acid levels by controlling the activity of two transcription factors, STP1 and STP2. Catalyzes the activation of these transcription factors, which are synthesized as latent cytoplasmic precursors, by proteolytic removal of an N-terminal inhibitory domain containing cytoplasmic retention motifs. SSY5 binds as an inactive protease complex to STP1. In response to extracellular amino acids and dependent on the other SPS-sensor components, the inhibitory propeptide is induced to dissociate, and thereby enables the catalytic domain to process STP1. In Saccharomyces cerevisiae (strain ATCC 204508 / S288c) (Baker's yeast), this protein is SPS-sensor serine protease component SSY5 (SSY5).